Reading from the N-terminus, the 98-residue chain is NADH-ubiquinone oxidoreductase chain 4L (98 aa).

A run of 3 helical transmembrane segments spans residues 1 to 21, 26 to 46, and 56 to 76; these read MSPL…GLAF, LISA…PLSI, and FALV…TGLA.

It belongs to the complex I subunit 4L family. Core subunit of respiratory chain NADH dehydrogenase (Complex I) which is composed of 45 different subunits.

Its subcellular location is the mitochondrion inner membrane. It carries out the reaction a ubiquinone + NADH + 5 H(+)(in) = a ubiquinol + NAD(+) + 4 H(+)(out). Its function is as follows. Core subunit of the mitochondrial membrane respiratory chain NADH dehydrogenase (Complex I) which catalyzes electron transfer from NADH through the respiratory chain, using ubiquinone as an electron acceptor. Part of the enzyme membrane arm which is embedded in the lipid bilayer and involved in proton translocation. This Gallus gallus (Chicken) protein is NADH-ubiquinone oxidoreductase chain 4L (MT-ND4L).